The following is a 1394-amino-acid chain: DNA-directed RNA polymerase subunit beta'' (1394 aa).

Residues Cys-224, Cys-295, Cys-302, and Cys-305 each coordinate Zn(2+).

It belongs to the RNA polymerase beta' chain family. RpoC2 subfamily. In terms of assembly, in plastids the minimal PEP RNA polymerase catalytic core is composed of four subunits: alpha, beta, beta', and beta''. When a (nuclear-encoded) sigma factor is associated with the core the holoenzyme is formed, which can initiate transcription. Zn(2+) is required as a cofactor.

The protein localises to the plastid. It localises to the chloroplast. It catalyses the reaction RNA(n) + a ribonucleoside 5'-triphosphate = RNA(n+1) + diphosphate. DNA-dependent RNA polymerase catalyzes the transcription of DNA into RNA using the four ribonucleoside triphosphates as substrates. This Vitis vinifera (Grape) protein is DNA-directed RNA polymerase subunit beta''.